A 285-amino-acid chain; its full sequence is Small ribosomal subunit protein uS5x (285 aa).

Residues 1 to 19 (MAERGGERGVERGGERGDF) are compositionally biased toward basic and acidic residues. Residues 1-51 (MAERGGERGVERGGERGDFGRGFGGRGGRGDRGGRGRGGRGGRRGGRASEE) form a disordered region. The segment covering 35–46 (RGRGGRGGRRGG) has biased composition (basic residues). An S5 DRBM domain is found at 96-159 (LKDEVMKIMP…ILAKLSVVPV (64 aa)).

The protein belongs to the universal ribosomal protein uS5 family. As to quaternary structure, interacts with MBD6.

Component of the ribosome, a large ribonucleoprotein complex responsible for the synthesis of proteins in the cell. The small ribosomal subunit (SSU) binds messenger RNAs (mRNAs) and translates the encoded message by selecting cognate aminoacyl-transfer RNA (tRNA) molecules. The large subunit (LSU) contains the ribosomal catalytic site termed the peptidyl transferase center (PTC), which catalyzes the formation of peptide bonds, thereby polymerizing the amino acids delivered by tRNAs into a polypeptide chain. The nascent polypeptides leave the ribosome through a tunnel in the LSU and interact with protein factors that function in enzymatic processing, targeting, and the membrane insertion of nascent chains at the exit of the ribosomal tunnel. Plays a role in the assembly and function of the 40S ribosomal subunit. Mutations in this protein affects the control of translational fidelity. Involved in nucleolar processing of pre-18S ribosomal RNA and ribosome assembly. Also involved in RNA-directed DNA methylation (RdDM). The polypeptide is Small ribosomal subunit protein uS5x (Arabidopsis thaliana (Mouse-ear cress)).